The chain runs to 443 residues: Signal recognition particle 54 kDa protein (443 aa).

Residues 107-114 (GVQGSGKT), 189-193 (DTAGR), and 247-250 (TKLD) contribute to the GTP site.

This sequence belongs to the GTP-binding SRP family. SRP54 subfamily. As to quaternary structure, part of the signal recognition particle protein translocation system, which is composed of SRP and FtsY. Archaeal SRP consists of a 7S RNA molecule of 300 nucleotides and two protein subunits: SRP54 and SRP19.

The protein resides in the cytoplasm. It catalyses the reaction GTP + H2O = GDP + phosphate + H(+). Involved in targeting and insertion of nascent membrane proteins into the cytoplasmic membrane. Binds to the hydrophobic signal sequence of the ribosome-nascent chain (RNC) as it emerges from the ribosomes. The SRP-RNC complex is then targeted to the cytoplasmic membrane where it interacts with the SRP receptor FtsY. This Pyrococcus horikoshii (strain ATCC 700860 / DSM 12428 / JCM 9974 / NBRC 100139 / OT-3) protein is Signal recognition particle 54 kDa protein.